The following is a 1110-amino-acid chain: MTTCRRERPILTLLWILMATAGCLADLNEVPQVTVQPMSTVQKLGGTVILGCVVEPPWMNVTWRFNGKELNGSDDALGVFITRGTLVIAALNNHTVGRYQCVARMPAGAVASVPATVTLANLQDFKLDVQHVIEVDEGNTAVIACHLPESHPKAQVRYSVKQEWLEASRDNYLIMPSGNLQIVNASQEDEGMYKCAAYNPVTQEVKTSGSGDRLRVRRSTAEAARIIYPLEAQTVIVTKGQSLILECVASGIPPPRVTWAKDGSSIAAYNKTRFLLSNLLIDTTSEEDSGTYRCMASNGVGDPGAAVILYNVQVFEPPEVTVELSQLVIPWGQSAKLTCEVRGNPPPSVLWLRNAVPLTSSQRLRLSRRALRVVSVGPEDEGVYQCMAENAVGSAHAVVQLRTARPDTTLRPGRDTKPIAATPPMPPSRPSRPDQMLREQPGLVKPPTSSVQPTSLKCPGEEQVAPAEAPIILSSPRTSKTDSYELVWRPRHEGSSRTPILYYVVKHRKVTNSSDDWTISGIPANQHRLTLTRLDPGSLYEVEMAAYNCAGEGQTAMVTFRTGRRPKPEIVASKEQQIQRDDPGASLQSSSQPDHGRLSPPEAPDRPTISTASETSVYVTWIPRGNGGFPIQSFRVEYKKLKKVGDWILATSAIPPSRLSVEITGLEKGISYKFRVRALNMLGESEPSAPSRPYVVSGYSGRVYERPVAGPYITFTDAVNETTIMLKWMYIPASNNNTPIHGFYIYYRPTDSDNDSDYKKDMVEGDRYWHSISHLQPETSYDIKMQCFNEGGESEFSNVMICETKARKFSGQPGRPPPLTLAPPQPPPLETMERPVGTGAMVARASDLPYLIVGVVLGSIVLIIVTFIPFCLWRAWSKQKHTTDLGFPRSALLSSSCQYTMVPLEGLPGHQANGQPYLGGVSGRACVSRVHGSRGCPAATVGCPGRKPQQHCPGELAQQREDTNSQLRQPIVSNGYDLQNQQVARGPQCASGVGAFLYTLPDDSTHQLLQPQDCCHLQKQPVTTCQTAVRRTSESPGLESSWDPPYHSGPRCCLGLVPVEEVDSSDSCQVGGGDWSSQHPSGTYTGQERGMRFSPSPSVHVSFETPPPTI.

A signal peptide spans 1 to 25; that stretch reads MTTCRRERPILTLLWILMATAGCLA. Over 26-850 the chain is Extracellular; the sequence is DLNEVPQVTV…MVARASDLPY (825 aa). Ig-like C2-type domains follow at residues 31–118, 124–208, 229–310, and 318–402; these read PQVT…ATVT, DFKL…VKTS, PLEA…VILY, and PEVT…VQLR. 4 disulfide bridges follow: C52-C101, C145-C195, C247-C294, and C339-C386. N60, N71, N93, N184, and N270 each carry an N-linked (GlcNAc...) asparagine glycan. The disordered stretch occupies residues 407-458; the sequence is DTTLRPGRDTKPIAATPPMPPSRPSRPDQMLREQPGLVKPPTSSVQPTSLKC. A compositionally biased stretch (pro residues) spans 421-430; sequence ATPPMPPSRP. Fibronectin type-III domains are found at residues 469-566, 603-698, and 707-807; these read APII…GRRP, APDR…VVSG, and PVAG…TKAR. N512 carries N-linked (GlcNAc...) asparagine glycosylation. The segment at 561 to 610 is disordered; the sequence is RTGRRPKPEIVASKEQQIQRDDPGASLQSSSQPDHGRLSPPEAPDRPTIS. N720 and N754 each carry an N-linked (GlcNAc...) asparagine glycan. Residues 809-828 form a disordered region; sequence FSGQPGRPPPLTLAPPQPPP. Residues 814–828 show a composition bias toward pro residues; it reads GRPPPLTLAPPQPPP. A helical transmembrane segment spans residues 851–871; it reads LIVGVVLGSIVLIIVTFIPFC. Residues 872–1110 are Cytoplasmic-facing; sequence LWRAWSKQKH…VSFETPPPTI (239 aa). A disordered region spans residues 1065–1110; it reads SDSCQVGGGDWSSQHPSGTYTGQERGMRFSPSPSVHVSFETPPPTI. A compositionally biased stretch (polar residues) spans 1075 to 1086; it reads WSSQHPSGTYTG.

Part of a complex that contains BOC, CDON, NEO1, cadherins and CTNNB1. Interacts with SHH, DHH and IHH. Interacts with NTN3. Interacts with CDH2 and CTNNB1. Interacts with CDH15 only during the early stages of myoblast differentiation. Highly expressed in embryonic somites, limb buds, dermomyotomes and in the neural tube.

The protein resides in the membrane. Functionally, component of a cell-surface receptor complex that mediates cell-cell interactions between muscle precursor cells. Promotes differentiation of myogenic cells. This is Brother of CDO (Boc) from Mus musculus (Mouse).